A 313-amino-acid chain; its full sequence is Aspartate carbamoyltransferase catalytic subunit (313 aa).

Carbamoyl phosphate-binding residues include R51 and T52. An L-aspartate-binding site is contributed by K80. The carbamoyl phosphate site is built by R101, H129, and Q132. L-aspartate-binding residues include R162 and R224. Positions 263 and 264 each coordinate carbamoyl phosphate.

The protein belongs to the aspartate/ornithine carbamoyltransferase superfamily. ATCase family. In terms of assembly, heterododecamer (2C3:3R2) of six catalytic PyrB chains organized as two trimers (C3), and six regulatory PyrI chains organized as three dimers (R2).

It catalyses the reaction carbamoyl phosphate + L-aspartate = N-carbamoyl-L-aspartate + phosphate + H(+). Its pathway is pyrimidine metabolism; UMP biosynthesis via de novo pathway; (S)-dihydroorotate from bicarbonate: step 2/3. Catalyzes the condensation of carbamoyl phosphate and aspartate to form carbamoyl aspartate and inorganic phosphate, the committed step in the de novo pyrimidine nucleotide biosynthesis pathway. The chain is Aspartate carbamoyltransferase catalytic subunit from Bacteroides thetaiotaomicron (strain ATCC 29148 / DSM 2079 / JCM 5827 / CCUG 10774 / NCTC 10582 / VPI-5482 / E50).